Consider the following 561-residue polypeptide: Sesquiterpene synthase TPS2 (561 aa).

Residues Ala-6–Ile-26 form a disordered region. Positions 277, 314, 318, 455, and 458 each coordinate (2E,6E)-farnesyl diphosphate. Asp-314 and Asp-318 together coordinate Mg(2+). The short motif at Asp-314–Asp-318 is the DDXXD motif element. Positions 458, 462, and 466 each coordinate Mg(2+).

Belongs to the terpene synthase family. Tpsa subfamily. Monomer. Mg(2+) serves as cofactor.

The protein resides in the cytoplasm. It carries out the reaction (2E,6E)-farnesyl diphosphate = beta-ylangene + diphosphate. The enzyme catalyses (2E,6E)-farnesyl diphosphate = beta-copaene + diphosphate. The catalysed reaction is (2E,6E)-farnesyl diphosphate = beta-cubebene + diphosphate. The protein operates within secondary metabolite biosynthesis; terpenoid biosynthesis. Its function is as follows. Sesquiterpene synthase involved in the biosynthesis of volatile organic compounds. Mediates the conversion of (2E,6E)-farnesyl diphosphate (FPP) into beta-ylangene, beta-copaene and beta-cubebene. Does not use (2E)-geranyl diphosphate (GPP) as substrate. In Cananga odorata (Ylang-ylang tree), this protein is Sesquiterpene synthase TPS2.